A 327-amino-acid chain; its full sequence is Phenylalanine--tRNA ligase alpha subunit (327 aa).

Glu252 contributes to the Mg(2+) binding site.

This sequence belongs to the class-II aminoacyl-tRNA synthetase family. Phe-tRNA synthetase alpha subunit type 1 subfamily. Tetramer of two alpha and two beta subunits. It depends on Mg(2+) as a cofactor.

The protein localises to the cytoplasm. The catalysed reaction is tRNA(Phe) + L-phenylalanine + ATP = L-phenylalanyl-tRNA(Phe) + AMP + diphosphate + H(+). The chain is Phenylalanine--tRNA ligase alpha subunit from Klebsiella pneumoniae subsp. pneumoniae (strain ATCC 700721 / MGH 78578).